The primary structure comprises 342 residues: N-acetyl-gamma-glutamyl-phosphate reductase (342 aa).

Residue Cys-146 is part of the active site.

Belongs to the NAGSA dehydrogenase family. Type 1 subfamily.

It localises to the cytoplasm. It catalyses the reaction N-acetyl-L-glutamate 5-semialdehyde + phosphate + NADP(+) = N-acetyl-L-glutamyl 5-phosphate + NADPH + H(+). It functions in the pathway amino-acid biosynthesis; L-arginine biosynthesis; N(2)-acetyl-L-ornithine from L-glutamate: step 3/4. In terms of biological role, catalyzes the NADPH-dependent reduction of N-acetyl-5-glutamyl phosphate to yield N-acetyl-L-glutamate 5-semialdehyde. The protein is N-acetyl-gamma-glutamyl-phosphate reductase of Thermobifida fusca (strain YX).